The sequence spans 438 residues: GTPase Der (438 aa).

2 consecutive EngA-type G domains span residues 4-168 (PLVT…KSEG) and 177-352 (IKIA…DNYS). GTP-binding positions include 10-17 (GRPNVGKS), 57-61 (DTGGI), 120-123 (NKID), 183-190 (GKPNVGKS), 230-234 (DTAGL), and 295-298 (NKWD). In terms of domain architecture, KH-like spans 353 to 437 (KRIATGVLND…GIKMIFKERK (85 aa)).

Belongs to the TRAFAC class TrmE-Era-EngA-EngB-Septin-like GTPase superfamily. EngA (Der) GTPase family. Associates with the 50S ribosomal subunit.

In terms of biological role, GTPase that plays an essential role in the late steps of ribosome biogenesis. The sequence is that of GTPase Der from Clostridium acetobutylicum (strain ATCC 824 / DSM 792 / JCM 1419 / IAM 19013 / LMG 5710 / NBRC 13948 / NRRL B-527 / VKM B-1787 / 2291 / W).